Here is a 474-residue protein sequence, read N- to C-terminus: MASAMRGEKCERSRIRELVLILSLITMAGDSRATPFDPSFFIEGVQSEVVNPFNRTILNRFNLTEEQILSIQNRSNPNMRDDSAQSSNQQYLQQVATQRLNDIFKRVQKAISNEPNGSASKEKAGFPICNAETTNPEDWSLGNNVTLQFASSVFISNNDDRLSSALLRLYKTNPGQTREHNPGQASTQPISTENPGNTAPNCAEQPPVGPQIRVTVSIVHQQRKKQRKKRTCNTAMLSSSSTGWVEIDVKCALAYWEQQHRQQLRQQQPLQPQLTASVVGILMIEVHDDEENLLRPGLYFAPPTCDQADIAVPWSVYRTEPFKSHLASWTLPRKPRLDIFFNGSNSMKNSYNTPKSRAFIESTTSNSPTIDNQLDESGEYESQQRVHAPLVHHRRHHHNHQQPESESESAQLEAEIEAEELMSSASNSEQQMEPISNHHRHRTGHHHPHHQLHQHHHHHHRHTKHHRIPAHKQE.

An N-terminal signal peptide occupies residues 1–33; the sequence is MASAMRGEKCERSRIRELVLILSLITMAGDSRA. N-linked (GlcNAc...) asparagine glycosylation is found at asparagine 54, asparagine 62, asparagine 73, asparagine 116, and asparagine 144. Residues 173-195 form a disordered region; sequence NPGQTREHNPGQASTQPISTENP. Residues 183–195 show a composition bias toward polar residues; the sequence is GQASTQPISTENP. Residue asparagine 342 is glycosylated (N-linked (GlcNAc...) asparagine). The segment covering 359–372 has biased composition (polar residues); that stretch reads FIESTTSNSPTIDN. Residues 359–474 are disordered; it reads FIESTTSNSP…HHRIPAHKQE (116 aa). Basic residues-rich tracts occupy residues 390–400 and 437–474; these read LVHHRRHHHNH and NHHRHRTGHHHPHHQLHQHHHHHHRHTKHHRIPAHKQE.

Synthesized in some glial cells and secreted.

The protein resides in the secreted. Its function is as follows. Negatively regulates proliferation of neuronal precursor cells, thereby controlling the timing of postembryonic neurogenesis. This chain is Protein anachronism (ana), found in Drosophila melanogaster (Fruit fly).